Here is a 141-residue protein sequence, read N- to C-terminus: Nucleoside triphosphatase NudI (141 aa).

The region spanning 1-141 is the Nudix hydrolase domain; that stretch reads MRQRTIVCPL…RKTLRLKGLL (141 aa). The Nudix box motif lies at 38 to 59; that stretch reads GGVEPGERIEEALRREIREELG.

The protein belongs to the Nudix hydrolase family. NudI subfamily. Monomer. Mg(2+) is required as a cofactor.

The enzyme catalyses a ribonucleoside 5'-triphosphate + H2O = a ribonucleoside 5'-phosphate + diphosphate + H(+). The catalysed reaction is a 2'-deoxyribonucleoside 5'-triphosphate + H2O = a 2'-deoxyribonucleoside 5'-phosphate + diphosphate + H(+). It catalyses the reaction dUTP + H2O = dUMP + diphosphate + H(+). It carries out the reaction dTTP + H2O = dTMP + diphosphate + H(+). The enzyme catalyses dCTP + H2O = dCMP + diphosphate + H(+). Functionally, catalyzes the hydrolysis of nucleoside triphosphates, with a preference for pyrimidine deoxynucleoside triphosphates (dUTP, dTTP and dCTP). This is Nucleoside triphosphatase NudI from Escherichia coli O17:K52:H18 (strain UMN026 / ExPEC).